The sequence spans 317 residues: Porphobilinogen deaminase (317 aa).

At Cys242 the chain carries S-(dipyrrolylmethanemethyl)cysteine.

This sequence belongs to the HMBS family. Monomer. It depends on dipyrromethane as a cofactor.

It catalyses the reaction 4 porphobilinogen + H2O = hydroxymethylbilane + 4 NH4(+). It participates in porphyrin-containing compound metabolism; protoporphyrin-IX biosynthesis; coproporphyrinogen-III from 5-aminolevulinate: step 2/4. Functionally, tetrapolymerization of the monopyrrole PBG into the hydroxymethylbilane pre-uroporphyrinogen in several discrete steps. The chain is Porphobilinogen deaminase from Colwellia psychrerythraea (strain 34H / ATCC BAA-681) (Vibrio psychroerythus).